The primary structure comprises 118 residues: Large ribosomal subunit protein bL20 (118 aa).

It belongs to the bacterial ribosomal protein bL20 family.

Binds directly to 23S ribosomal RNA and is necessary for the in vitro assembly process of the 50S ribosomal subunit. It is not involved in the protein synthesizing functions of that subunit. In Lachnoclostridium phytofermentans (strain ATCC 700394 / DSM 18823 / ISDg) (Clostridium phytofermentans), this protein is Large ribosomal subunit protein bL20.